A 257-amino-acid chain; its full sequence is NAD-capped RNA hydrolase NudC (257 aa).

Substrate-binding residues include Lys-25 and Arg-69. Residues Cys-98 and Cys-101 each coordinate Zn(2+). Substrate is bound at residue Glu-111. Zn(2+) is bound by residues Cys-116 and Cys-119. A substrate-binding site is contributed by Tyr-124. The 124-residue stretch at 125–248 folds into the Nudix hydrolase domain; it reads PQIAPCIIVA…TVARRLIEDT (124 aa). Residues Ala-158, Glu-174, and Glu-178 each contribute to the a divalent metal cation site. A Nudix box motif is present at residues 159-180; it reads GFVEVGETLEQAVAREVMEESG. 192 to 199 contacts substrate; sequence QPWPFPQS. An a divalent metal cation-binding site is contributed by Glu-219. Ala-241 contributes to the substrate binding site.

The protein belongs to the Nudix hydrolase family. NudC subfamily. As to quaternary structure, homodimer. Requires Mg(2+) as cofactor. Mn(2+) is required as a cofactor. It depends on Zn(2+) as a cofactor.

It catalyses the reaction a 5'-end NAD(+)-phospho-ribonucleoside in mRNA + H2O = a 5'-end phospho-adenosine-phospho-ribonucleoside in mRNA + beta-nicotinamide D-ribonucleotide + 2 H(+). It carries out the reaction NAD(+) + H2O = beta-nicotinamide D-ribonucleotide + AMP + 2 H(+). The enzyme catalyses NADH + H2O = reduced beta-nicotinamide D-ribonucleotide + AMP + 2 H(+). MRNA decapping enzyme that specifically removes the nicotinamide adenine dinucleotide (NAD) cap from a subset of mRNAs by hydrolyzing the diphosphate linkage to produce nicotinamide mononucleotide (NMN) and 5' monophosphate mRNA. The NAD-cap is present at the 5'-end of some mRNAs and stabilizes RNA against 5'-processing. Has preference for mRNAs with a 5'-end purine. Catalyzes the hydrolysis of a broad range of dinucleotide pyrophosphates. This is NAD-capped RNA hydrolase NudC from Shigella dysenteriae serotype 1 (strain Sd197).